The sequence spans 326 residues: D-allose transport system permease protein AlsC (326 aa).

At 1–18 the chain is on the cytoplasmic side; the sequence is MGFTTRVKSEASEKKPFN. Residues 19–39 traverse the membrane as a helical segment; the sequence is FALFWDKYGTFFILAIIVAIF. Residues 40–70 lie on the Periplasmic side of the membrane; the sequence is GSLSPEYFLTTNNITQIFVQSSVTVLIGMGE. Residues 71–91 form a helical membrane-spanning segment; sequence FFAILVAGIDLSVGAILALSG. Residues 92–101 lie on the Cytoplasmic side of the membrane; it reads MVTAKLMLAG. A helical membrane pass occupies residues 102 to 122; the sequence is VDPFLAAMIGGVLVGGALGAI. The Periplasmic portion of the chain corresponds to 123 to 124; it reads NG. The chain crosses the membrane as a helical span at residues 125-145; that stretch reads CLVNWTGLHPFIITLGTNAIF. At 146–149 the chain is on the cytoplasmic side; it reads RGIT. Residues 150-170 traverse the membrane as a helical segment; the sequence is LVISDANSVYGFSFDFVNFFA. Residues 171–172 lie on the Periplasmic side of the membrane; that stretch reads AS. Residues 173–193 traverse the membrane as a helical segment; that stretch reads VIGIPVPVIFSLIVALILWFL. The Cytoplasmic portion of the chain corresponds to 194 to 221; it reads TTRMRLGRNIYALGGNKNSAFYSGIDVK. A helical membrane pass occupies residues 222–242; that stretch reads FHILVVFIISGVCAGLAGVVS. Topologically, residues 243–252 are periplasmic; it reads TARLGAAEPL. A helical transmembrane segment spans residues 253 to 273; that stretch reads AGMGFETYAIASAIIGGTSFF. Over 274 to 278 the chain is Cytoplasmic; it reads GGKGR. 2 consecutive transmembrane segments (helical) span residues 279–299 and 300–320; these read IFSV…LNIL and QVQT…AVAL. Over 321 to 326 the chain is Cytoplasmic; sequence DRLISK.

The protein belongs to the binding-protein-dependent transport system permease family. AraH/RbsC subfamily.

Its subcellular location is the cell inner membrane. Functionally, part of the binding-protein-dependent transport system AlsBAC for D-allose; probably responsible for the translocation of the substrate across the membrane. The sequence is that of D-allose transport system permease protein AlsC (alsC) from Escherichia coli (strain K12).